A 129-amino-acid chain; its full sequence is M-zodatoxin-Lt8f (129 aa).

The N-terminal stretch at 1–20 (MKYFVVALALVAAFACIAES) is a signal peptide. Residues 21–60 (KPAESEHELAEVEEENELADLEDAVWLEHLADLSDLEEAR) constitute a propeptide that is removed on maturation. A Processing quadruplet motif motif is present at residues 57 to 60 (EEAR).

Cleavage of the propeptide depends on the processing quadruplet motif (XXXR, with at least one of X being E). In terms of tissue distribution, expressed by the venom gland.

The protein localises to the secreted. In terms of biological role, insecticidal, cytolytic and antimicrobial peptide. Has insecticidal activity against the flesh fly S.carnaria. Has antibacterial activity against the Gram-negative bacteria E.coli. Forms voltage-dependent, ion-permeable channels in membranes. At high concentration causes cell membrane lysis. This Lachesana tarabaevi (Spider) protein is M-zodatoxin-Lt8f (cit 1-7).